The chain runs to 224 residues: Deoxyribose-phosphate aldolase (224 aa).

Residue aspartate 98 is the Proton donor/acceptor of the active site. Lysine 159 (schiff-base intermediate with acetaldehyde) is an active-site residue. Catalysis depends on lysine 189, which acts as the Proton donor/acceptor.

It belongs to the DeoC/FbaB aldolase family. DeoC type 1 subfamily.

It is found in the cytoplasm. The catalysed reaction is 2-deoxy-D-ribose 5-phosphate = D-glyceraldehyde 3-phosphate + acetaldehyde. It participates in carbohydrate degradation; 2-deoxy-D-ribose 1-phosphate degradation; D-glyceraldehyde 3-phosphate and acetaldehyde from 2-deoxy-alpha-D-ribose 1-phosphate: step 2/2. Catalyzes a reversible aldol reaction between acetaldehyde and D-glyceraldehyde 3-phosphate to generate 2-deoxy-D-ribose 5-phosphate. This chain is Deoxyribose-phosphate aldolase, found in Methanothermobacter thermautotrophicus (strain ATCC 29096 / DSM 1053 / JCM 10044 / NBRC 100330 / Delta H) (Methanobacterium thermoautotrophicum).